Reading from the N-terminus, the 100-residue chain is Small ribosomal subunit protein uS14c (100 aa).

This sequence belongs to the universal ribosomal protein uS14 family. As to quaternary structure, part of the 30S ribosomal subunit.

It is found in the plastid. Its subcellular location is the chloroplast. Binds 16S rRNA, required for the assembly of 30S particles. The chain is Small ribosomal subunit protein uS14c from Phalaenopsis aphrodite subsp. formosana (Moth orchid).